The chain runs to 261 residues: MWFLILFLALSLGGIDAAPPVQSRIVGGFKCEKNSQPWHVAVYRYTQYLCGGVLLDPNWVLTAAHCYDDNYKVWLGKNNLFKDEPSAQHRFVSKAIPHPGFNMSLMRKHIRFLEYDYSNDLMLLRLSKPADITDTVKPITLPTEEPKLGSTCLASGWGSITPTKFQFTDDLYCVNLKLLPNEDCAKAHIEKVTDAMLCAGEMDGGKDTCKGDSGGPLICDGVLQGITSWGHTPCGEPDMPGVYTKLNKFTSWIKDTMAKNP.

The first 18 residues, 1 to 18 (MWFLILFLALSLGGIDAA), serve as a signal peptide directing secretion. The propeptide at 19–24 (PPVQSR) is activation peptide. The segment at 25–107 (IVGGFKCEKN…HPGFNMSLMR (83 aa)) is segment B1. Residues 25–258 (IVGGFKCEKN…FTSWIKDTMA (234 aa)) form the Peptidase S1 domain. Disulfide bonds link C31–C173, C50–C66, C152–C219, C184–C198, and C209–C234. H65 functions as the Charge relay system in the catalytic mechanism. N-linked (GlcNAc...) asparagine glycosylation occurs at N102. Residues 112-164 (FLEYDYSNDLMLLRLSKPADITDTVKPITLPTEEPKLGSTCLASGWGSITPTK) form a segment C region. The tract at residues 112–261 (FLEYDYSNDL…WIKDTMAKNP (150 aa)) is segment A. The Charge relay system role is filled by D120. The segment at 165 to 261 (FQFTDDLYCV…WIKDTMAKNP (97 aa)) is segment B2. The active-site Charge relay system is S213. Zn(2+)-binding residues include H231 and E236.

Belongs to the peptidase S1 family. Kallikrein subfamily. In terms of assembly, 7S nerve growth factor is composed of two alpha chains, a beta dimer composed of identical chains, and two gamma chains. The cofactor is Zn(2+).

It carries out the reaction Preferential cleavage of Arg-|-Xaa bonds in small molecule substrates. Highly selective action to release kallidin (lysyl-bradykinin) from kininogen involves hydrolysis of Met-|-Xaa or Leu-|-Xaa.. In terms of biological role, 7S NGF alpha chain stabilizes the 7S complex. The beta dimer promotes neurite growth. The gamma chain is an arginine-specific protease; it may also have plasminogen activator activity, as well as mitogenic activity for chick embryo fibroblasts. The protein is Kallikrein 1-related peptidase b3 (Klk1b3) of Mus musculus (Mouse).